A 164-amino-acid polypeptide reads, in one-letter code: 17.8 kDa heat shock protein (164 aa).

Residues 20-154 (VVAGEARPPM…HAGNGKAAGD (135 aa)) form the sHSP domain. The tract at residues 68–93 (GEHEDANNAAKAGKASGEEEEENDGV) is disordered.

Belongs to the small heat shock protein (HSP20) family. May form oligomeric structures.

Its subcellular location is the cytoplasm. This chain is 17.8 kDa heat shock protein (HSP17.8), found in Oryza sativa subsp. japonica (Rice).